We begin with the raw amino-acid sequence, 584 residues long: 2-succinyl-5-enolpyruvyl-6-hydroxy-3-cyclohexene-1-carboxylate synthase (584 aa).

Belongs to the TPP enzyme family. MenD subfamily. Homodimer. The cofactor is Mg(2+). Mn(2+) is required as a cofactor. Requires thiamine diphosphate as cofactor.

The enzyme catalyses isochorismate + 2-oxoglutarate + H(+) = 5-enolpyruvoyl-6-hydroxy-2-succinyl-cyclohex-3-ene-1-carboxylate + CO2. It participates in quinol/quinone metabolism; 1,4-dihydroxy-2-naphthoate biosynthesis; 1,4-dihydroxy-2-naphthoate from chorismate: step 2/7. The protein operates within quinol/quinone metabolism; menaquinone biosynthesis. Catalyzes the thiamine diphosphate-dependent decarboxylation of 2-oxoglutarate and the subsequent addition of the resulting succinic semialdehyde-thiamine pyrophosphate anion to isochorismate to yield 2-succinyl-5-enolpyruvyl-6-hydroxy-3-cyclohexene-1-carboxylate (SEPHCHC). The polypeptide is 2-succinyl-5-enolpyruvyl-6-hydroxy-3-cyclohexene-1-carboxylate synthase (Bacillus cereus (strain ATCC 10987 / NRS 248)).